Here is a 470-residue protein sequence, read N- to C-terminus: 6-phospho-beta-galactosidase (470 aa).

D-galactose 6-phosphate contacts are provided by glutamine 19, histidine 116, asparagine 159, glutamate 160, and asparagine 297. Catalysis depends on glutamate 160, which acts as the Proton donor. Residue glutamate 375 is the Nucleophile of the active site. Positions 430, 431, 437, and 439 each coordinate D-galactose 6-phosphate.

It belongs to the glycosyl hydrolase 1 family.

It carries out the reaction a 6-phospho-beta-D-galactoside + H2O = D-galactose 6-phosphate + an alcohol. It functions in the pathway carbohydrate metabolism; lactose degradation; D-galactose 6-phosphate and beta-D-glucose from lactose 6-phosphate: step 1/1. The sequence is that of 6-phospho-beta-galactosidase from Staphylococcus epidermidis (strain ATCC 35984 / DSM 28319 / BCRC 17069 / CCUG 31568 / BM 3577 / RP62A).